The sequence spans 248 residues: 3-deoxy-manno-octulosonate cytidylyltransferase (248 aa).

The protein belongs to the KdsB family.

The protein localises to the cytoplasm. It catalyses the reaction 3-deoxy-alpha-D-manno-oct-2-ulosonate + CTP = CMP-3-deoxy-beta-D-manno-octulosonate + diphosphate. The protein operates within nucleotide-sugar biosynthesis; CMP-3-deoxy-D-manno-octulosonate biosynthesis; CMP-3-deoxy-D-manno-octulosonate from 3-deoxy-D-manno-octulosonate and CTP: step 1/1. It functions in the pathway bacterial outer membrane biogenesis; lipopolysaccharide biosynthesis. Its function is as follows. Activates KDO (a required 8-carbon sugar) for incorporation into bacterial lipopolysaccharide in Gram-negative bacteria. This chain is 3-deoxy-manno-octulosonate cytidylyltransferase, found in Salmonella agona (strain SL483).